The sequence spans 220 residues: Glutathione S-transferase U23 (220 aa).

The GST N-terminal domain occupies 3–82 (EEIILLDYWA…YIDELWPDTN (80 aa)). Glutathione is bound by residues 13–14 (SM), 39–40 (NK), 53–54 (KI), and 66–67 (ES). The GST C-terminal domain maps to 88-208 (DPYQRAQARF…LPDSDKVLKS (121 aa)).

This sequence belongs to the GST superfamily. Tau family.

The protein localises to the cytoplasm. The protein resides in the cytosol. The catalysed reaction is RX + glutathione = an S-substituted glutathione + a halide anion + H(+). Its function is as follows. May be involved in the conjugation of reduced glutathione to a wide number of exogenous and endogenous hydrophobic electrophiles and have a detoxification role against certain herbicides. The sequence is that of Glutathione S-transferase U23 (GSTU23) from Arabidopsis thaliana (Mouse-ear cress).